A 617-amino-acid chain; its full sequence is Sodium-coupled monocarboxylate transporter 2 (617 aa).

The Extracellular portion of the chain corresponds to 1–5; sequence MEVKN. Residues 6–26 traverse the membrane as a helical segment; it reads FAVWDYVVFAALFIISSGIGV. Residues 27 to 47 lie on the Cytoplasmic side of the membrane; sequence FYAIKERKKATSREFLVGGRQ. A helical membrane pass occupies residues 48–68; the sequence is MSFGPVALSLTASFMSAVTVL. Residues 69 to 80 are Extracellular-facing; the sequence is GTPADVYRFGAS. The chain crosses the membrane as a helical span at residues 81–101; it reads FVLFFITYGLVIILTSELFLP. Residues 102–128 lie on the Cytoplasmic side of the membrane; that stretch reads VFYRSGITSTYEYLQLRFNKPVRYAAT. Residues 129-149 traverse the membrane as a helical segment; it reads VIYIVQTILYTGVVVYAPALA. At 150 to 157 the chain is on the extracellular side; sequence LNQVTGFD. The helical transmembrane segment at 158–178 threads the bilayer; that stretch reads LWGSVFATGIVCTFYCTLGGL. Over 179–180 the chain is Cytoplasmic; the sequence is KA. A helical membrane pass occupies residues 181 to 201; the sequence is VVWTDAFQMVVMIVGFLTVLI. Residues 202-235 are Extracellular-facing; the sequence is QGSTYAGGLHNVLEQAENGSRLNIFDFDIDPLRR. The N-linked (GlcNAc...) asparagine glycan is linked to Asn219. The chain crosses the membrane as a helical span at residues 236–256; that stretch reads HTFWTISVGGTFTWLGIYGVN. The Cytoplasmic portion of the chain corresponds to 257–273; it reads QSTIQRCISCKTEKHAK. Residues 274-294 form a helical membrane-spanning segment; it reads LALYFNLLGLWIILLCAVFSG. At 295–334 the chain is on the extracellular side; it reads LTMYAHFKDCDPWTSGIISAPDQLMPYFVMELFSTMPGLP. A helical membrane pass occupies residues 335 to 357; sequence GLFVACAFSGTLSTVAASINALA. At 358–385 the chain is on the cytoplasmic side; sequence TVTFEDFVKSCFPRLSDKLSTWISKGLC. A helical transmembrane segment spans residues 386–406; the sequence is LLFGVICTSTAVAASLMGGVI. Residues 407–411 lie on the Extracellular side of the membrane; sequence QAALS. Residues 412 to 432 form a helical membrane-spanning segment; the sequence is IHGMCGGPMLGLFSLGILFPF. At 433 to 437 the chain is on the cytoplasmic side; sequence VNWKG. Residues 438–458 traverse the membrane as a helical segment; it reads ALAGLLTGILLSFWVAIGAFI. Over 459–507 the chain is Extracellular; that stretch reads YPAPASKTWPLPLSTDQCGLSNVTESVPPVLSSRPAIAETWYALSYLHY. An N-linked (GlcNAc...) asparagine glycan is attached at Asn480. A helical membrane pass occupies residues 508-528; sequence STVGCLGCIAAGVIISFLTGL. Topologically, residues 529 to 617 are cytoplasmic; it reads QKGKDIPPLL…NMALEKITHF (89 aa).

This sequence belongs to the sodium:solute symporter (SSF) (TC 2.A.21) family.

The protein localises to the apical cell membrane. The catalysed reaction is (S)-lactate(out) + Na(+)(out) = (S)-lactate(in) + Na(+)(in). It catalyses the reaction nicotinate(out) + Na(+)(out) = nicotinate(in) + Na(+)(in). The enzyme catalyses pyruvate(out) + Na(+)(out) = pyruvate(in) + Na(+)(in). It carries out the reaction propanoate(out) + Na(+)(out) = propanoate(in) + Na(+)(in). The catalysed reaction is butanoate(out) + Na(+)(out) = butanoate(in) + Na(+)(in). It catalyses the reaction acetoacetate(out) + Na(+)(out) = acetoacetate(in) + Na(+)(in). In terms of biological role, acts as an electroneutral and low-affinity sodium (Na(+))-dependent sodium-coupled solute transporter. Catalyzes the transport across the plasma membrane of many monocarboxylates such as lactate, pyruvate, nicotinate, propionate, butyrate and beta-D-hydroxybutyrate. May be responsible for the first step of reabsorption of monocarboxylates from the lumen of the proximal tubule of the kidney and the small intestine. May play also a role in monocarboxylates transport in the retina. Mediates electroneutral uptake of lactate, with a stoichiometry of 2 Na(+) for each lactate. The sequence is that of Sodium-coupled monocarboxylate transporter 2 (SLC5A12) from Bos taurus (Bovine).